Here is a 112-residue protein sequence, read N- to C-terminus: Tyrosine-protein phosphatase 8 (112 aa).

The 112-residue stretch at 1-112 (ENSTAIVMIT…ANSEYGPVVV (112 aa)) folds into the Tyrosine-protein phosphatase domain.

The protein belongs to the protein-tyrosine phosphatase family.

The catalysed reaction is O-phospho-L-tyrosyl-[protein] + H2O = L-tyrosyl-[protein] + phosphate. This chain is Tyrosine-protein phosphatase 8 (STY-8), found in Styela plicata (Wrinkled sea squirt).